A 281-amino-acid polypeptide reads, in one-letter code: NAD kinase (281 aa).

Catalysis depends on aspartate 61, which acts as the Proton acceptor. NAD(+)-binding positions include aspartate 61–glycine 62, asparagine 134–aspartate 135, arginine 145, aspartate 164, threonine 175–serine 180, and glutamine 234.

The protein belongs to the NAD kinase family. Requires a divalent metal cation as cofactor.

It localises to the cytoplasm. It catalyses the reaction NAD(+) + ATP = ADP + NADP(+) + H(+). In terms of biological role, involved in the regulation of the intracellular balance of NAD and NADP, and is a key enzyme in the biosynthesis of NADP. Catalyzes specifically the phosphorylation on 2'-hydroxyl of the adenosine moiety of NAD to yield NADP. This Clostridium botulinum (strain ATCC 19397 / Type A) protein is NAD kinase.